A 428-amino-acid chain; its full sequence is 2-isopropylmalate synthase 2 (428 aa).

The 263-residue stretch at P40–Y302 folds into the Pyruvate carboxyltransferase domain. Mn(2+) contacts are provided by D49, H241, H243, and N277.

The protein belongs to the alpha-IPM synthase/homocitrate synthase family. LeuA type 1 subfamily. In terms of assembly, homodimer. The cofactor is Mn(2+).

It localises to the cytoplasm. The enzyme catalyses 3-methyl-2-oxobutanoate + acetyl-CoA + H2O = (2S)-2-isopropylmalate + CoA + H(+). It functions in the pathway amino-acid biosynthesis; L-leucine biosynthesis; L-leucine from 3-methyl-2-oxobutanoate: step 1/4. Functionally, catalyzes the condensation of the acetyl group of acetyl-CoA with 3-methyl-2-oxobutanoate (2-ketoisovalerate) to form 3-carboxy-3-hydroxy-4-methylpentanoate (2-isopropylmalate). Has high alpha-isopropylmalate synthase activity and low citramalate synthase activity. The chain is 2-isopropylmalate synthase 2 from Leptospira interrogans serogroup Icterohaemorrhagiae serovar Lai (strain 56601).